Reading from the N-terminus, the 121-residue chain is Cu-Zn superoxide dismutase-like protein (121 aa).

Residues cysteine 48 and cysteine 98 are joined by a disulfide bond.

This sequence belongs to the Cu-Zn superoxide dismutase family.

Its subcellular location is the host cytoplasm. In terms of biological role, virion protein with no enzymatic activity. The sequence is that of Cu-Zn superoxide dismutase-like protein from Vaccinia virus (strain Ankara) (VACV).